A 99-amino-acid chain; its full sequence is METLSFEFPAGQPPRGRALVGCVGSGDLEVLIEPGLAGRLTINVQTSVNGAEQRWQHLFARMFDGTTPPAMAIDIHDFGATPGVVRLRLEQGFEEIGHD.

Residue Ser-25 is modified to O-(phosphoribosyl dephospho-coenzyme A)serine.

The protein belongs to the MdcC family. In terms of processing, covalently binds the prosthetic group of malonate decarboxylase.

The protein resides in the cytoplasm. Functionally, subunit of malonate decarboxylase, it is an acyl carrier protein to which acetyl and malonyl thioester residues are bound via a 2'-(5''-phosphoribosyl)-3'-dephospho-CoA prosthetic group and turn over during the catalytic mechanism. The polypeptide is Malonate decarboxylase acyl carrier protein (Pseudomonas fluorescens (strain Pf0-1)).